Consider the following 463-residue polypeptide: Lysosomal proton-coupled steroid conjugate and bile acid symporter SLC46A3 (463 aa).

The first 20 residues, 1-20, serve as a signal peptide directing secretion; sequence MKILFVEPAIFLSAFAMTLT. The Extracellular portion of the chain corresponds to 21 to 73; sequence SPLTTQYVYRRIWEETGNYTFSSDSNISECEKNKSSPIFAFQEEVQKKVSRFN. N38, N46, and N53 each carry an N-linked (GlcNAc...) asparagine glycan. The helical transmembrane segment at 74–94 threads the bilayer; it reads LQMDISGLIPGLVSTFILLSI. Topologically, residues 95-101 are cytoplasmic; sequence SDHYGRK. The chain crosses the membrane as a helical span at residues 102–124; sequence FPMILSSVGALATSVWLCLLCYF. Residues 125–133 lie on the Extracellular side of the membrane; the sequence is AFPFQLLIA. A helical membrane pass occupies residues 134 to 156; it reads STFIGAFCGNYTTFWGACFAYIV. Residues 157 to 170 lie on the Cytoplasmic side of the membrane; the sequence is DQCKEHKQKTIRIA. Residues 171 to 191 form a helical membrane-spanning segment; the sequence is VIDFLLGLVTGLTGLSSGYFI. The Extracellular portion of the chain corresponds to 192-197; the sequence is RELGFG. The helical transmembrane segment at 198-218 threads the bilayer; it reads WSFLIIAASLAVNLIYILFFL. Residues 219 to 261 are Cytoplasmic-facing; it reads GDPVKECSSQNVTMSCSEGFKNLFYRTYMLFKNASGKRRFLLC. The helical transmembrane segment at 262-282 threads the bilayer; that stretch reads LLLFTTITYFFVVIGIAPIFI. The Extracellular portion of the chain corresponds to 283–294; the sequence is LYELDSPLCWNE. A helical membrane pass occupies residues 295–315; it reads VFIGYGSALGSASFLTSFLGI. At 316–324 the chain is on the cytoplasmic side; that stretch reads WLFSYCMED. Residues 325–345 form a helical membrane-spanning segment; sequence IHMAFIGIFTTMTGMVMTAFA. Topologically, residues 346–347 are extracellular; that stretch reads ST. Residues 348–368 form a helical membrane-spanning segment; sequence TLMMFLARVPFLFTIVPFSVL. Topologically, residues 369-382 are cytoplasmic; sequence RSMLSKVVRSTEQG. The helical transmembrane segment at 383-403 threads the bilayer; sequence ILFACIAFLETLGGVTAVSTF. Topologically, residues 404 to 415 are extracellular; it reads NGIYSATVAWYP. Residues 416–436 traverse the membrane as a helical segment; it reads GFTFLLSAGLLLLPAISLCVV. Over 437 to 463 the chain is Cytoplasmic; that stretch reads KCTSWNEGSYELLIQEESSEDASDRAC. Positions 446 to 449 match the Tyrosine-based lysosomal-sorting motif motif; it reads YELL.

It belongs to the major facilitator superfamily. SLC46A family.

The protein localises to the lysosome membrane. The catalysed reaction is estrone 3-sulfate(out) + n H(+)(out) = estrone 3-sulfate(in) + n H(+)(in). It catalyses the reaction 25-hydroxyvitamin D3 sulfate(out) + n H(+)(out) = 25-hydroxyvitamin D3 sulfate(in) + n H(+)(in). It carries out the reaction cholate(out) + n H(+)(out) = cholate(in) + n H(+)(in). The enzyme catalyses glycocholate(out) + n H(+)(out) = glycocholate(in) + n H(+)(in). The catalysed reaction is taurocholate(out) + n H(+)(out) = taurocholate(in) + n H(+)(in). It catalyses the reaction dehydroepiandrosterone 3-sulfate(out) + n H(+)(out) = dehydroepiandrosterone 3-sulfate(in) + n H(+)(in). It carries out the reaction N-acetyl-D-muramoyl-L-alanyl-D-isoglutamine(out) + n H(+)(out) = N-acetyl-D-muramoyl-L-alanyl-D-isoglutamine(in) + n H(+)(in). The enzyme catalyses 2',3'-cGAMP(out) + n H(+)(out) = 2',3'-cGAMP(in) + n H(+)(in). Its function is as follows. Lysosomal proton-coupled steroid conjugate and bile acid transporter. Preferentially recognizes lipophilic steroid conjugates or bile acis as endogenous substrates and seems to mediate escape from lysosomes to the cytoplasm. Modulates hepatic cytosolic copper homeostasis, maybe acting as a lysosomal copper transporter and sequestering copper ions in the lysosome. Delivers pathogen-associated molecular patterns to cytosolic pattern recognition receptors as part of the innate immune response to microbes. Selectively transports bacterial muramyl dipeptide (MDP) into the cytosol for recognition by NOD2, triggering inflammatory responses. Likely acts as a redundant importer of cyclic GMP-AMP dinucleotides (cGAMPs) in monocyte and macrophage cell lineages. The transport mechanism, its electrogenicity and stoichiometry remain to be elucidated. The protein is Lysosomal proton-coupled steroid conjugate and bile acid symporter SLC46A3 (SLC46A3) of Pongo abelii (Sumatran orangutan).